A 39-amino-acid chain; its full sequence is Photosystem II reaction center protein L (39 aa).

A helical transmembrane segment spans residues 18–38; the sequence is SLYLGLLSVFVLGILFSSYFF.

It belongs to the PsbL family. In terms of assembly, PSII is composed of 1 copy each of membrane proteins PsbA, PsbB, PsbC, PsbD, PsbE, PsbF, PsbH, PsbI, PsbJ, PsbK, PsbL, PsbM, PsbT, PsbX, PsbY, Psb30/Ycf12, peripheral proteins PsbO, CyanoQ (PsbQ), PsbU, PsbV and a large number of cofactors. It forms dimeric complexes.

The protein resides in the cellular thylakoid membrane. Functionally, one of the components of the core complex of photosystem II (PSII). PSII is a light-driven water:plastoquinone oxidoreductase that uses light energy to abstract electrons from H(2)O, generating O(2) and a proton gradient subsequently used for ATP formation. It consists of a core antenna complex that captures photons, and an electron transfer chain that converts photonic excitation into a charge separation. This subunit is found at the monomer-monomer interface and is required for correct PSII assembly and/or dimerization. In Prochlorococcus marinus (strain MIT 9301), this protein is Photosystem II reaction center protein L.